The chain runs to 70 residues: MFTLKKSLLLIFFLGTISLSLCEKERDADDDEVEVIKQEEKRGFLNTAMNTVTNLAGTLMDKAKCKIRGC.

The first 22 residues, 1 to 22 (MFTLKKSLLLIFFLGTISLSLC), serve as a signal peptide directing secretion. The propeptide at 23–40 (EKERDADDDEVEVIKQEE) is removed in mature form. Cys-65 and Cys-70 are joined by a disulfide.

It belongs to the frog skin active peptide (FSAP) family. Ranatuerin subfamily. As to expression, expressed by the skin glands.

It localises to the secreted. Functionally, antimicrobial peptide. Weakly active against P.faecalis X29. Not active against fungi. Shows very weak hemolytic activity against human erythrocytes. The polypeptide is Ranatuerin-2SN1 (Sylvirana spinulosa (Fine-spined frog)).